Consider the following 160-residue polypeptide: Thebaine synthase 2 (160 aa).

Residue serine 74 coordinates thebaine. Histidine 89 functions as the Proton acceptor in the catalytic mechanism. Threonine 105 lines the thebaine pocket.

It belongs to the MLP family. As to quaternary structure, homodimer (allosteric) and oligomers. In terms of tissue distribution, expressed in poppy latex.

It carries out the reaction (7S)-O-acetylsalutaridinol = thebaine + acetate + H(+). It participates in alkaloid biosynthesis; morphine biosynthesis. Its activity is regulated as follows. Slightly inhibited by salutaridine and (7S)-salutaridinol. Its function is as follows. Catalyzes the formation of thebaine from (7S)-salutaridinol 7-O-acetate at the expense of labile hydroxylated by-products, which are preferentially produced by spontaneous allylic elimination. No visible activity toward (7S)-salutaridinol (at pH 7). The chain is Thebaine synthase 2 from Papaver somniferum (Opium poppy).